We begin with the raw amino-acid sequence, 473 residues long: Photosystem II CP43 reaction center protein (473 aa).

Positions 1 to 14 (MKTLYSLRRFYHVE) are excised as a propeptide. T15 is subject to N-acetylthreonine. Residue T15 is modified to Phosphothreonine. The next 5 membrane-spanning stretches (helical) occupy residues 69–93 (LFEV…PHLA), 134–155 (LIGP…RDKN), 178–200 (KAIY…RIID), 255–275 (KPFA…LSYS), and 291–312 (WYNN…ASQS). Position 367 (E367) interacts with [CaMn4O5] cluster. A helical membrane pass occupies residues 447–471 (RARAAAAGFEKGINRENEPVLTLRP).

The protein belongs to the PsbB/PsbC family. PsbC subfamily. As to quaternary structure, PSII is composed of 1 copy each of membrane proteins PsbA, PsbB, PsbC, PsbD, PsbE, PsbF, PsbH, PsbI, PsbJ, PsbK, PsbL, PsbM, PsbT, PsbX, PsbY, PsbZ, Psb30/Ycf12, at least 3 peripheral proteins of the oxygen-evolving complex and a large number of cofactors. It forms dimeric complexes. Binds multiple chlorophylls and provides some of the ligands for the Ca-4Mn-5O cluster of the oxygen-evolving complex. It may also provide a ligand for a Cl- that is required for oxygen evolution. PSII binds additional chlorophylls, carotenoids and specific lipids. is required as a cofactor.

The protein localises to the plastid. Its subcellular location is the chloroplast thylakoid membrane. Its function is as follows. One of the components of the core complex of photosystem II (PSII). It binds chlorophyll and helps catalyze the primary light-induced photochemical processes of PSII. PSII is a light-driven water:plastoquinone oxidoreductase, using light energy to abstract electrons from H(2)O, generating O(2) and a proton gradient subsequently used for ATP formation. This chain is Photosystem II CP43 reaction center protein, found in Guillardia theta (Cryptophyte).